The primary structure comprises 256 residues: Imidazole glycerol phosphate synthase subunit HisF (256 aa).

Residues aspartate 12 and aspartate 131 contribute to the active site.

This sequence belongs to the HisA/HisF family. In terms of assembly, heterodimer of HisH and HisF.

It is found in the cytoplasm. It carries out the reaction 5-[(5-phospho-1-deoxy-D-ribulos-1-ylimino)methylamino]-1-(5-phospho-beta-D-ribosyl)imidazole-4-carboxamide + L-glutamine = D-erythro-1-(imidazol-4-yl)glycerol 3-phosphate + 5-amino-1-(5-phospho-beta-D-ribosyl)imidazole-4-carboxamide + L-glutamate + H(+). The protein operates within amino-acid biosynthesis; L-histidine biosynthesis; L-histidine from 5-phospho-alpha-D-ribose 1-diphosphate: step 5/9. IGPS catalyzes the conversion of PRFAR and glutamine to IGP, AICAR and glutamate. The HisF subunit catalyzes the cyclization activity that produces IGP and AICAR from PRFAR using the ammonia provided by the HisH subunit. This chain is Imidazole glycerol phosphate synthase subunit HisF, found in Pseudomonas syringae pv. syringae (strain B728a).